The following is an 823-amino-acid chain: Semaphorin-4B (823 aa).

An N-terminal signal peptide occupies residues Met1–Ala30. The Extracellular portion of the chain corresponds to Leu31 to Glu703. Residues Arg34–Val510 form the Sema domain. Residues Asn53, Asn56, and Asn83 are each glycosylated (N-linked (GlcNAc...) asparagine). A disulfide bond links Cys107 and Cys118. An N-linked (GlcNAc...) asparagine glycan is attached at Asn129. 3 disulfide bridges follow: Cys136–Cys145, Cys273–Cys386, and Cys297–Cys346. N-linked (GlcNAc...) asparagine glycans are attached at residues Asn397 and Asn512. A PSI domain is found at Asn512–Lys582. Cys513 and Cys530 form a disulfide bridge. N-linked (GlcNAc...) asparagine glycosylation is found at Asn567, Asn615, and Asn680. The Ig-like C2-type domain occupies Asn589–Phe649. The cysteines at positions 596 and 642 are disulfide-linked. Residues Phe704–Tyr724 traverse the membrane as a helical segment. At Arg725–Val823 the chain is on the cytoplasmic side. Phosphoserine occurs at positions 779, 780, 804, and 816.

This sequence belongs to the semaphorin family. As to quaternary structure, interacts with GIPC PDZ domain.

It is found in the membrane. Functionally, inhibits axonal extension by providing local signals to specify territories inaccessible for growing axons. This is Semaphorin-4B from Mus musculus (Mouse).